We begin with the raw amino-acid sequence, 224 residues long: uncharacterized protein (224 aa).

Helical transmembrane passes span 25 to 45, 54 to 74, 91 to 111, 119 to 139, 142 to 162, and 174 to 194; these read MMLALAIITSLISEFISIPFF, ISVVFLVACAFFVSLGWSLTI, IGVLTVTLANLSTILFTRLYF, FCWIFVFLFTTLSNALLLTTL, ILITPLFWYYFGYVQTPNFLI, and HFFFFGINNYWLGIFCLYSFF.

It is found in the cell membrane. This is an uncharacterized protein from Mycoplasma genitalium (strain ATCC 33530 / DSM 19775 / NCTC 10195 / G37) (Mycoplasmoides genitalium).